The sequence spans 320 residues: MAVVLDLLANDARPRHPEKAHRPDQPIQRKPDWIRVRAPGSPGWAETNRIVREHGLVTVCEEAGCPNIGECWEKKHATFMIMGDTCTRACAFCNVRTGLPQGLDGDEPARVADAVARLGLSHVVITSVDRDDLRDGGAGHFAAVIGAIRQASPGTTIEVLTPDFLRKEGALDVVVAAKPDVFNHNLETVPSKYLTVRPGARYFHSVRLLQRVKELDPTMFTKSGIMVGLGEERNEVLQLMDDLRSAEVDFLTIGQYLQPTKKHHPVKRFVPPDEFRAYETTAYAKGFLLVSATPLTRSSHHAGADFARLKQARLDRLATA.

Residues 9–31 form a disordered region; that stretch reads ANDARPRHPEKAHRPDQPIQRKP. The span at 12–31 shows a compositional bias: basic and acidic residues; it reads ARPRHPEKAHRPDQPIQRKP. Residues C60, C65, C71, C86, C90, C93, and S299 each coordinate [4Fe-4S] cluster. The region spanning 72–288 is the Radical SAM core domain; sequence WEKKHATFMI…ETTAYAKGFL (217 aa).

This sequence belongs to the radical SAM superfamily. Lipoyl synthase family. The cofactor is [4Fe-4S] cluster.

It localises to the cytoplasm. The enzyme catalyses [[Fe-S] cluster scaffold protein carrying a second [4Fe-4S](2+) cluster] + N(6)-octanoyl-L-lysyl-[protein] + 2 oxidized [2Fe-2S]-[ferredoxin] + 2 S-adenosyl-L-methionine + 4 H(+) = [[Fe-S] cluster scaffold protein] + N(6)-[(R)-dihydrolipoyl]-L-lysyl-[protein] + 4 Fe(3+) + 2 hydrogen sulfide + 2 5'-deoxyadenosine + 2 L-methionine + 2 reduced [2Fe-2S]-[ferredoxin]. Its pathway is protein modification; protein lipoylation via endogenous pathway; protein N(6)-(lipoyl)lysine from octanoyl-[acyl-carrier-protein]: step 2/2. Its function is as follows. Catalyzes the radical-mediated insertion of two sulfur atoms into the C-6 and C-8 positions of the octanoyl moiety bound to the lipoyl domains of lipoate-dependent enzymes, thereby converting the octanoylated domains into lipoylated derivatives. In Methylobacterium nodulans (strain LMG 21967 / CNCM I-2342 / ORS 2060), this protein is Lipoyl synthase.